The following is a 938-amino-acid chain: Phosphoenolpyruvate carboxylase (938 aa).

Residues H151 and K591 contribute to the active site.

This sequence belongs to the PEPCase type 1 family. The cofactor is Mg(2+).

The catalysed reaction is oxaloacetate + phosphate = phosphoenolpyruvate + hydrogencarbonate. Its function is as follows. Forms oxaloacetate, a four-carbon dicarboxylic acid source for the tricarboxylic acid cycle. The protein is Phosphoenolpyruvate carboxylase of Roseiflexus castenholzii (strain DSM 13941 / HLO8).